Here is a 295-residue protein sequence, read N- to C-terminus: Pyridoxal 5'-phosphate synthase subunit PdxS (295 aa).

Asp25 contributes to the D-ribose 5-phosphate binding site. Lys82 functions as the Schiff-base intermediate with D-ribose 5-phosphate in the catalytic mechanism. Gly154 is a binding site for D-ribose 5-phosphate. Arg166 provides a ligand contact to D-glyceraldehyde 3-phosphate. D-ribose 5-phosphate-binding positions include Gly215 and 236–237; that span reads GS.

This sequence belongs to the PdxS/SNZ family. As to quaternary structure, in the presence of PdxT, forms a dodecamer of heterodimers.

The catalysed reaction is aldehydo-D-ribose 5-phosphate + D-glyceraldehyde 3-phosphate + L-glutamine = pyridoxal 5'-phosphate + L-glutamate + phosphate + 3 H2O + H(+). The protein operates within cofactor biosynthesis; pyridoxal 5'-phosphate biosynthesis. Its function is as follows. Catalyzes the formation of pyridoxal 5'-phosphate from ribose 5-phosphate (RBP), glyceraldehyde 3-phosphate (G3P) and ammonia. The ammonia is provided by the PdxT subunit. Can also use ribulose 5-phosphate and dihydroxyacetone phosphate as substrates, resulting from enzyme-catalyzed isomerization of RBP and G3P, respectively. This chain is Pyridoxal 5'-phosphate synthase subunit PdxS, found in Bacillus cereus (strain 03BB102).